Consider the following 804-residue polypeptide: Elongation factor G, mitochondrial (804 aa).

Residues 1-9 (MVRPAQVRA) constitute a mitochondrion transit peptide. The tr-type G domain occupies 103 to 389 (SKVRNIGIAA…GVCDYLPNPS (287 aa)). Residues 112-119 (AHIDSGKT), 187-191 (DTPGH), and 241-244 (NKMD) contribute to the GTP site.

It belongs to the TRAFAC class translation factor GTPase superfamily. Classic translation factor GTPase family. EF-G/EF-2 subfamily.

It localises to the mitochondrion. It participates in protein biosynthesis; polypeptide chain elongation. Functionally, mitochondrial GTPase that catalyzes the GTP-dependent ribosomal translocation step during translation elongation. During this step, the ribosome changes from the pre-translocational (PRE) to the post-translocational (POST) state as the newly formed A-site-bound peptidyl-tRNA and P-site-bound deacylated tRNA move to the P and E sites, respectively. Catalyzes the coordinated movement of the two tRNA molecules, the mRNA and conformational changes in the ribosome. In Talaromyces stipitatus (strain ATCC 10500 / CBS 375.48 / QM 6759 / NRRL 1006) (Penicillium stipitatum), this protein is Elongation factor G, mitochondrial (mef1).